The primary structure comprises 248 residues: Pulmonary surfactant-associated protein A (248 aa).

Positions 1–20 (MLLCSLTLTLILLAVSGTKC) are cleaved as a signal peptide. Residues 31–100 (GVPGIPGSPG…PGERGPPGPP (70 aa)) enclose the Collagen-like domain. A disordered region spans residues 34–105 (GIPGSPGLPG…PPGPPAYPDE (72 aa)). Residues 54–65 (PGPPGPIGPPGG) are compositionally biased toward pro residues. Positions 84–93 (ERGDKGEPGE) are enriched in basic and acidic residues. Residues 134–247 (VGEKVFSTNG…CLQYRLAICE (114 aa)) form the C-type lectin domain. Cystine bridges form between Cys155-Cys246 and Cys224-Cys238. Asn207 is a glycosylation site (N-linked (GlcNAc...) asparagine). Ca(2+) is bound by residues Glu215, Arg217, Asn234, and Asp235.

Belongs to the SFTPA family. In terms of assembly, oligomeric complex of 6 set of homotrimers.

It is found in the secreted. It localises to the extracellular space. The protein localises to the extracellular matrix. The protein resides in the surface film. In presence of calcium ions, it binds to surfactant phospholipids and contributes to lower the surface tension at the air-liquid interface in the alveoli of the mammalian lung and is essential for normal respiration. Enhances the expression of MYO18A/SP-R210 on alveolar macrophages. In Equus caballus (Horse), this protein is Pulmonary surfactant-associated protein A (SFTPA1).